The primary structure comprises 788 residues: Choline transporter-like protein 1 (788 aa).

Residues 98-118 form a helical membrane-spanning segment; it reads FLFFVFLCGWVVVASLGIMWG. A glycan (N-linked (GlcNAc...) asparagine) is linked at Asn276. Transmembrane regions (helical) follow at residues 329–349, 352–372, 409–429, and 458–478; these read WWQTLILIFAAGMLSFIWTVI, LLGSLLIWLSIFLVLGALGFG, FVVAIATSVLLVIFLLVILFI, and LFPFLLHIGVFALWGSIAIWL. The N-linked (GlcNAc...) asparagine glycan is linked to Asn497. A run of 5 helical transmembrane segments spans residues 531-551, 583-603, 620-640, 679-699, and 718-738; these read LFAFFWLSCFVTALGDIALAG, LGSIAFGSLIIAIVKIIRVML, WFLMCLKCCFWCLEMFFKFLT, AGILLFLGKAMITLGMGILSF, and YYFVPIVIVVIGSYFMADLFF.

Belongs to the CTL (choline transporter-like) family.

Its subcellular location is the membrane. The chain is Choline transporter-like protein 1 (chtl-1) from Caenorhabditis briggsae.